Here is a 186-residue protein sequence, read N- to C-terminus: Protein MTH_152 (186 aa).

It belongs to the flavoredoxin family. As to quaternary structure, homodimer. FMN is required as a cofactor.

In Methanothermobacter thermautotrophicus (strain ATCC 29096 / DSM 1053 / JCM 10044 / NBRC 100330 / Delta H) (Methanobacterium thermoautotrophicum), this protein is Protein MTH_152.